Here is a 361-residue protein sequence, read N- to C-terminus: Histidine biosynthesis bifunctional protein HisB (361 aa).

Residues 1–172 are histidinol-phosphatase; that stretch reads MSQPTLFIDR…PKTTACERPP (172 aa). Asp9 serves as the catalytic Nucleophile. Residues Asp9 and Asp11 each contribute to the Mg(2+) site. Asp11 acts as the Proton donor in catalysis. Zn(2+) is bound by residues Cys92, His94, Cys100, and Cys102. Residue Asp129 coordinates Mg(2+). The segment at 173-361 is imidazoleglycerol-phosphate dehydratase; that stretch reads RYAEVVRTTK…NELPSSKGVL (189 aa).

The protein in the N-terminal section; belongs to the histidinol-phosphatase family. This sequence in the C-terminal section; belongs to the imidazoleglycerol-phosphate dehydratase family. Mg(2+) is required as a cofactor. Requires Zn(2+) as cofactor.

The protein resides in the cytoplasm. The enzyme catalyses D-erythro-1-(imidazol-4-yl)glycerol 3-phosphate = 3-(imidazol-4-yl)-2-oxopropyl phosphate + H2O. It catalyses the reaction L-histidinol phosphate + H2O = L-histidinol + phosphate. Its pathway is amino-acid biosynthesis; L-histidine biosynthesis; L-histidine from 5-phospho-alpha-D-ribose 1-diphosphate: step 6/9. It functions in the pathway amino-acid biosynthesis; L-histidine biosynthesis; L-histidine from 5-phospho-alpha-D-ribose 1-diphosphate: step 8/9. The sequence is that of Histidine biosynthesis bifunctional protein HisB from Actinobacillus pleuropneumoniae serotype 7 (strain AP76).